Consider the following 1360-residue polypeptide: DNA-directed RNA polymerase subunit beta (1360 aa).

The protein belongs to the RNA polymerase beta chain family. In terms of assembly, the RNAP catalytic core consists of 2 alpha, 1 beta, 1 beta' and 1 omega subunit. When a sigma factor is associated with the core the holoenzyme is formed, which can initiate transcription.

The enzyme catalyses RNA(n) + a ribonucleoside 5'-triphosphate = RNA(n+1) + diphosphate. In terms of biological role, DNA-dependent RNA polymerase catalyzes the transcription of DNA into RNA using the four ribonucleoside triphosphates as substrates. The chain is DNA-directed RNA polymerase subunit beta from Vesicomyosocius okutanii subsp. Calyptogena okutanii (strain HA).